The primary structure comprises 755 residues: uncharacterized protein (755 aa).

Disordered stretches follow at residues 1–44 (MAAP…AAAQ), 72–91 (AEHS…ATAQ), 99–174 (FSLS…IPHY), 393–467 (TTNV…SSSR), 523–545 (LPKT…EGGG), 584–672 (VSSS…LPSG), and 734–755 (QAAT…PRRK). Composition is skewed to low complexity over residues 10–25 (TTTQ…TTTT) and 35–44 (TTTGSGAAAQ). 3 stretches are compositionally biased toward low complexity: residues 112 to 130 (ISSS…NASS), 139 to 151 (SPDL…LSGS), and 393 to 412 (TTNV…TKST). Positions 429 to 446 (IEEDTIQFDDPGQGEDDN) are enriched in acidic residues. The segment covering 452–462 (NTPPPPGPPPN) has biased composition (pro residues). The span at 536–545 (ATGGVTEGGG) shows a compositional bias: gly residues. Over residues 590 to 599 (LPQPQVATTI) the composition is skewed to polar residues. Composition is skewed to low complexity over residues 600 to 666 (TPQA…QTPQ) and 740 to 755 (SQPS…PRRK).

It belongs to the chlamydial CPn_0572/CT_456/TC_0741 family.

This is an uncharacterized protein from Chlamydia pneumoniae (Chlamydophila pneumoniae).